A 444-amino-acid polypeptide reads, in one-letter code: Serine--tRNA ligase (444 aa).

An L-serine-binding site is contributed by 243–245; it reads TAE. Position 274 to 276 (274 to 276) interacts with ATP; that stretch reads RSE. E297 serves as a coordination point for L-serine. An ATP-binding site is contributed by 361 to 364; it reads EISS. Residue S397 participates in L-serine binding.

It belongs to the class-II aminoacyl-tRNA synthetase family. Type-1 seryl-tRNA synthetase subfamily. Homodimer. The tRNA molecule binds across the dimer.

It is found in the cytoplasm. It catalyses the reaction tRNA(Ser) + L-serine + ATP = L-seryl-tRNA(Ser) + AMP + diphosphate + H(+). It carries out the reaction tRNA(Sec) + L-serine + ATP = L-seryl-tRNA(Sec) + AMP + diphosphate + H(+). It functions in the pathway aminoacyl-tRNA biosynthesis; selenocysteinyl-tRNA(Sec) biosynthesis; L-seryl-tRNA(Sec) from L-serine and tRNA(Sec): step 1/1. Its function is as follows. Catalyzes the attachment of serine to tRNA(Ser). Is also able to aminoacylate tRNA(Sec) with serine, to form the misacylated tRNA L-seryl-tRNA(Sec), which will be further converted into selenocysteinyl-tRNA(Sec). This Acidobacterium capsulatum (strain ATCC 51196 / DSM 11244 / BCRC 80197 / JCM 7670 / NBRC 15755 / NCIMB 13165 / 161) protein is Serine--tRNA ligase.